The primary structure comprises 393 residues: Dihydrolipoyllysine-residue succinyltransferase component of 2-oxoglutarate dehydrogenase complex (393 aa).

Positions arginine 3–valine 78 constitute a Lipoyl-binding domain. At lysine 44 the chain carries N6-lipoyllysine. Residues histidine 364 and aspartate 368 contribute to the active site.

Belongs to the 2-oxoacid dehydrogenase family. As to quaternary structure, forms a 24-polypeptide structural core with octahedral symmetry. Part of the 2-oxoglutarate dehydrogenase (OGDH) complex composed of E1 (2-oxoglutarate dehydrogenase), E2 (dihydrolipoamide succinyltransferase) and E3 (dihydrolipoamide dehydrogenase); the complex contains multiple copies of the three enzymatic components (E1, E2 and E3). (R)-lipoate is required as a cofactor.

It catalyses the reaction N(6)-[(R)-dihydrolipoyl]-L-lysyl-[protein] + succinyl-CoA = N(6)-[(R)-S(8)-succinyldihydrolipoyl]-L-lysyl-[protein] + CoA. It participates in amino-acid degradation; L-lysine degradation via saccharopine pathway; glutaryl-CoA from L-lysine: step 6/6. Functionally, E2 component of the 2-oxoglutarate dehydrogenase (OGDH) complex which catalyzes the second step in the conversion of 2-oxoglutarate to succinyl-CoA and CO(2). The sequence is that of Dihydrolipoyllysine-residue succinyltransferase component of 2-oxoglutarate dehydrogenase complex (sucB) from Buchnera aphidicola subsp. Schizaphis graminum (strain Sg).